A 264-amino-acid chain; its full sequence is Carbonic anhydrase 7 (264 aa).

One can recognise an Alpha-carbonic anhydrase domain in the interval 5–262 (HGWGYGQDDG…LKGRVVKASF (258 aa)). Histidine 66 (proton donor/acceptor) is an active-site residue. 3 residues coordinate Zn(2+): histidine 96, histidine 98, and histidine 121. 201 to 202 (TT) provides a ligand contact to substrate.

The protein belongs to the alpha-carbonic anhydrase family. Zn(2+) is required as a cofactor.

The protein localises to the cytoplasm. The enzyme catalyses hydrogencarbonate + H(+) = CO2 + H2O. Activated by histamine, L-adrenaline, L- and D-histidine, and L- and D-phenylalanine. Inhibited by coumarins, sulfonamide derivatives such as acetazolamide (AZA), by saccharin and Foscarnet (phosphonoformate trisodium salt). Reversible hydration of carbon dioxide. The chain is Carbonic anhydrase 7 (CA7) from Homo sapiens (Human).